The chain runs to 810 residues: Calpain-3 (810 aa).

The span at 9–27 (VAQQTAAGSVPSTTSTTTE) shows a compositional bias: low complexity. The tract at residues 9–31 (VAQQTAAGSVPSTTSTTTEGTGG) is disordered. In terms of domain architecture, Calpain catalytic spans 68–410 (LYEDPDFPPN…FTKLEICNLT (343 aa)). Active-site residues include Cys123, His327, and Asn351. The interval 411–579 (PDTLEADKLQ…KRSLSEEVEN (169 aa)) is domain III. Residues 578–639 (ENMIEADRPS…SAKAREKSEE (62 aa)) form a disordered region. Residues 580 to 638 (MIEADRPSKKKKGKPIIFVSDRANSNKELTTDEDAGKDGEKTHVDEKKRSSAKAREKSE) form a linker region. Positions 613–639 (DAGKDGEKTHVDEKKRSSAKAREKSEE) are enriched in basic and acidic residues. EF-hand domains follow at residues 638–672 (EEET…VVKK), 681–714 (FELE…DKIK), 711–746 (DKIK…AGFR), and 776–810 (VRLD…TMYA). Residues 639–809 (EETQFRNIFR…VLEWLQLTMY (171 aa)) are domain IV. 18 residues coordinate Ca(2+): Ala651, Asp654, Glu656, Glu661, Asp694, Asp696, Ser698, Lys700, Glu705, Asp724, Asp726, Ser728, Thr730, Glu735, Asp789, Asp791, Asp793, and Ile795.

This sequence belongs to the peptidase C2 family. As to quaternary structure, homodimer; via EF-hand domain 4. Interacts with TTN/titin. Interacts with CMYA5; this interaction, which results in CMYA5 proteolysis, may protect CAPN3 from autolysis. Interacts with SIMC1. Interacts with UTP25; the interaction is required for CAPN3 translocation to the nucleolus. As to expression, skeletal muscle. Low levels in spleen, intestine and bone.

The protein localises to the cytoplasm. It is found in the nucleus. The protein resides in the nucleolus. The catalysed reaction is Broad endopeptidase activity.. Activated by micromolar concentrations of calcium and inhibited by calpastatin. Its function is as follows. Calcium-regulated non-lysosomal thiol-protease. Proteolytically cleaves CTBP1. Mediates, with UTP25, the proteasome-independent degradation of p53/TP53. The sequence is that of Calpain-3 (CAPN3) from Gallus gallus (Chicken).